Consider the following 162-residue polypeptide: ATP synthase subunit b (162 aa).

The chain crosses the membrane as a helical span at residues 2 to 22; the sequence is LEFNATLLAQIVDFIILLIFL.

The protein belongs to the ATPase B chain family. As to quaternary structure, F-type ATPases have 2 components, F(1) - the catalytic core - and F(0) - the membrane proton channel. F(1) has five subunits: alpha(3), beta(3), gamma(1), delta(1), epsilon(1). F(0) has three main subunits: a(1), b(2) and c(10-14). The alpha and beta chains form an alternating ring which encloses part of the gamma chain. F(1) is attached to F(0) by a central stalk formed by the gamma and epsilon chains, while a peripheral stalk is formed by the delta and b chains.

It is found in the cell membrane. F(1)F(0) ATP synthase produces ATP from ADP in the presence of a proton or sodium gradient. F-type ATPases consist of two structural domains, F(1) containing the extramembraneous catalytic core and F(0) containing the membrane proton channel, linked together by a central stalk and a peripheral stalk. During catalysis, ATP synthesis in the catalytic domain of F(1) is coupled via a rotary mechanism of the central stalk subunits to proton translocation. In terms of biological role, component of the F(0) channel, it forms part of the peripheral stalk, linking F(1) to F(0). This Pelotomaculum thermopropionicum (strain DSM 13744 / JCM 10971 / SI) protein is ATP synthase subunit b.